We begin with the raw amino-acid sequence, 372 residues long: MHNQAPIQRRKSTRIYVGNVPIGDGAPIAVQSMTNTRTTDVEATVNQIKALERVGADIVRVSVPTMDEAEAFKLIKQRVNVPLVADIHFDYRIALKVAEYGVDCLRINPGNIGNEERIRMVVDCARDKNIPIRIGVNAGSLEKDLQEKYGEPTPQALLESAMRHVDHLDRLNFAQFKVSVKASDVFLAVESYRLLAKQIDQPLHLGITEAGGARSGAVKSAIGLGLLLSEGIGDTLRVSLAADPVEEIKVGFDILKSLRIRSRGINFIACPTCSRQEFDVIGTVNALEQRLEDIITPMDVSIIGCVVNGPGEALVSTLGVTGGNKKSGLYEDGVRKDRLDNNDMIDQLEARIRAKASQLDEARRIDVQQVEK.

[4Fe-4S] cluster contacts are provided by Cys270, Cys273, Cys305, and Glu312.

Belongs to the IspG family. [4Fe-4S] cluster serves as cofactor.

It carries out the reaction (2E)-4-hydroxy-3-methylbut-2-enyl diphosphate + oxidized [flavodoxin] + H2O + 2 H(+) = 2-C-methyl-D-erythritol 2,4-cyclic diphosphate + reduced [flavodoxin]. The protein operates within isoprenoid biosynthesis; isopentenyl diphosphate biosynthesis via DXP pathway; isopentenyl diphosphate from 1-deoxy-D-xylulose 5-phosphate: step 5/6. In terms of biological role, converts 2C-methyl-D-erythritol 2,4-cyclodiphosphate (ME-2,4cPP) into 1-hydroxy-2-methyl-2-(E)-butenyl 4-diphosphate. In Shigella boydii serotype 18 (strain CDC 3083-94 / BS512), this protein is 4-hydroxy-3-methylbut-2-en-1-yl diphosphate synthase (flavodoxin).